The primary structure comprises 140 residues: Mialostatin (140 aa).

The N-terminal stretch at 1-18 is a signal peptide; the sequence is MAFFKSAVFLVCVVLAAA. 2 disulfide bridges follow: C90/C103 and C114/C134.

The protein belongs to the cystatin family. In terms of tissue distribution, expressed in midgut (at protein level).

Its subcellular location is the secreted. Its function is as follows. Inhibitor of cysteine proteinases. Inhibits several endogenous midgut digestive cysteine proteases, such as cathepsin L1, L3, B and C, but not aspartic protease cathepsin D1 and cysteine protease legumain. Inhibits proteolysis of blood proteins catalyzed by tick gut cysteine cathepsins. Inhibits host cathepsin B (CSTB), C (CTSC), H (CTSH), K (CTSK), L (CTSL) and S (CTSS). This chain is Mialostatin, found in Ixodes ricinus (Common tick).